The sequence spans 309 residues: Homoserine kinase (309 aa).

91–101 contributes to the ATP binding site; that stretch reads PIGSGLGSSAC.

Belongs to the GHMP kinase family. Homoserine kinase subfamily.

The protein resides in the cytoplasm. The enzyme catalyses L-homoserine + ATP = O-phospho-L-homoserine + ADP + H(+). It participates in amino-acid biosynthesis; L-threonine biosynthesis; L-threonine from L-aspartate: step 4/5. Catalyzes the ATP-dependent phosphorylation of L-homoserine to L-homoserine phosphate. This Yersinia enterocolitica serotype O:8 / biotype 1B (strain NCTC 13174 / 8081) protein is Homoserine kinase.